The primary structure comprises 358 residues: Probable branched-chain-amino-acid aminotransferase (358 aa).

Lysine 196 is subject to N6-(pyridoxal phosphate)lysine.

It belongs to the class-IV pyridoxal-phosphate-dependent aminotransferase family. Requires pyridoxal 5'-phosphate as cofactor.

It catalyses the reaction L-leucine + 2-oxoglutarate = 4-methyl-2-oxopentanoate + L-glutamate. The enzyme catalyses L-isoleucine + 2-oxoglutarate = (S)-3-methyl-2-oxopentanoate + L-glutamate. The catalysed reaction is L-valine + 2-oxoglutarate = 3-methyl-2-oxobutanoate + L-glutamate. It functions in the pathway amino-acid biosynthesis; L-isoleucine biosynthesis; L-isoleucine from 2-oxobutanoate: step 4/4. It participates in amino-acid biosynthesis; L-leucine biosynthesis; L-leucine from 3-methyl-2-oxobutanoate: step 4/4. The protein operates within amino-acid biosynthesis; L-valine biosynthesis; L-valine from pyruvate: step 4/4. Its function is as follows. Acts on leucine, isoleucine and valine. In Staphylococcus aureus (strain MRSA252), this protein is Probable branched-chain-amino-acid aminotransferase (ilvE).